A 149-amino-acid polypeptide reads, in one-letter code: UPF0179 protein MA_3685 (149 aa).

The protein belongs to the UPF0179 family.

The sequence is that of UPF0179 protein MA_3685 from Methanosarcina acetivorans (strain ATCC 35395 / DSM 2834 / JCM 12185 / C2A).